The sequence spans 291 residues: MKSQFRHVALIGKYQAQGSRSALEDIAHFLGAQGCEVALEEDTARNTGLTQYPTLDAAGIGAQCDLALVVGGDGTMLGIGRLLAQFGVPVVGINQGRLGFITDIGFEHYQNTLAPMLRGEFEEDRRWMMQAKVVRDGHCVFRATAMNDVVVNRGATSGMVELRVEVDGRFVANQRADGLIIASPTGSTAYALSAGGPMLHPSIAGWVLVPIAPHTLSNRPIVLSDSGEVVIEIVAGRDASASFDQQSLATLLHGDRISVRRSEHQMRFLHPKGWSYFDTLRKKLHWNEGVA.

Residue aspartate 73 is the Proton acceptor of the active site. Residues 73–74, 147–148, arginine 175, aspartate 177, 188–193, alanine 212, and glutamine 246 contribute to the NAD(+) site; these read DG, ND, and TAYALS.

Belongs to the NAD kinase family. Requires a divalent metal cation as cofactor.

It localises to the cytoplasm. The catalysed reaction is NAD(+) + ATP = ADP + NADP(+) + H(+). In terms of biological role, involved in the regulation of the intracellular balance of NAD and NADP, and is a key enzyme in the biosynthesis of NADP. Catalyzes specifically the phosphorylation on 2'-hydroxyl of the adenosine moiety of NAD to yield NADP. In Polaromonas naphthalenivorans (strain CJ2), this protein is NAD kinase.